We begin with the raw amino-acid sequence, 417 residues long: MRLVYGLGRSGLGVLRFLRKRGLPARFYDDRPREEEVREALALGFQPDWNLEEAYEEVVAAPGVPLDHPHLKRLAARGAKVLGEAELAYRLSPTPIVGITGTAGKTSTTLFTAHLLRAHGLRAREGGNVDPPLVSVVDEAEVAVAELSSFQLERVHAFRPRVAVLLNLGVDHLDRHGTVEAYHAAKLNLLKNLTPEDALVYNRLDPKVRRAAEASPARLYPFTPGSTPRETNLRAALEATRAYLDLLGRPLDPGAVAEALRTLPEAPHRFQAFARKGGVVFIDDSIATRTEAVRAALEAAPAPIAWILGGEDKGADLAPLLPLLGRVRVALALGRDGPRFARALEGRTEVVVIAEKDGRTAMRKAVEEALSRLEQGSVLLAPLAASFDQFRDYKDRAQAFREAVFALGGEPWTPSSS.

101 to 107 is a binding site for ATP; that stretch reads GTAGKTS.

This sequence belongs to the MurCDEF family.

It localises to the cytoplasm. The enzyme catalyses UDP-N-acetyl-alpha-D-muramoyl-L-alanine + D-glutamate + ATP = UDP-N-acetyl-alpha-D-muramoyl-L-alanyl-D-glutamate + ADP + phosphate + H(+). It functions in the pathway cell wall biogenesis; peptidoglycan biosynthesis. Functionally, cell wall formation. Catalyzes the addition of glutamate to the nucleotide precursor UDP-N-acetylmuramoyl-L-alanine (UMA). The chain is UDP-N-acetylmuramoylalanine--D-glutamate ligase from Thermus thermophilus (strain ATCC BAA-163 / DSM 7039 / HB27).